A 97-amino-acid chain; its full sequence is Small ribosomal subunit protein bS20 (97 aa).

Belongs to the bacterial ribosomal protein bS20 family.

Its function is as follows. Binds directly to 16S ribosomal RNA. This is Small ribosomal subunit protein bS20 from Synechocystis sp. (strain ATCC 27184 / PCC 6803 / Kazusa).